Reading from the N-terminus, the 823-residue chain is Trimethylamine-N-oxide reductase (823 aa).

Positions 1 to 32 (MKQSRRQFLKNMSAMAATFAMPNFLIAQNAFA) form a signal peptide, tat-type signal. S181 serves as a coordination point for Mo-bis(molybdopterin guanine dinucleotide).

It belongs to the prokaryotic molybdopterin-containing oxidoreductase family. Requires Mo-bis(molybdopterin guanine dinucleotide) as cofactor. Predicted to be exported by the Tat system. The position of the signal peptide cleavage has not been experimentally proven.

The protein resides in the periplasm. The catalysed reaction is trimethylamine + 2 Fe(III)-[cytochrome c] + H2O = trimethylamine N-oxide + 2 Fe(II)-[cytochrome c] + 3 H(+). Functionally, reduces trimethylamine-N-oxide (TMAO) into trimethylamine; an anaerobic reaction coupled to energy-yielding reactions. This chain is Trimethylamine-N-oxide reductase (torA), found in Pasteurella multocida (strain Pm70).